A 104-amino-acid chain; its full sequence is Phosphoribosyl-ATP pyrophosphatase (104 aa).

This sequence belongs to the PRA-PH family.

The protein resides in the cytoplasm. The catalysed reaction is 1-(5-phospho-beta-D-ribosyl)-ATP + H2O = 1-(5-phospho-beta-D-ribosyl)-5'-AMP + diphosphate + H(+). It participates in amino-acid biosynthesis; L-histidine biosynthesis; L-histidine from 5-phospho-alpha-D-ribose 1-diphosphate: step 2/9. The protein is Phosphoribosyl-ATP pyrophosphatase of Streptococcus sanguinis (strain SK36).